A 70-amino-acid polypeptide reads, in one-letter code: MQGVQEQIEELQTKLAFQELTVEELNQEVIKLNQLVAHQQHQIQLLIGKLQAIEPSNMATQAEETPPPHY.

Belongs to the SlyX family.

The protein is Protein SlyX homolog of Shewanella oneidensis (strain ATCC 700550 / JCM 31522 / CIP 106686 / LMG 19005 / NCIMB 14063 / MR-1).